The following is a 453-amino-acid chain: Na(+)/H(+) antiporter NhaA 2 (453 aa).

The next 11 membrane-spanning stretches (helical) occupy residues 32–52 (GALL…PGAA), 71–91 (LSLA…VAGL), 109–129 (AVPI…YVLI), 140–160 (GWAI…AVIG), 169–189 (VFLL…IAVF), 193–213 (NLSV…AILL), 232–252 (ALVH…ALVV), 284–304 (AVPV…GGLV), 310–330 (PVAI…VIAV), 356–376 (MLAG…FAAG), and 382–402 (HVKI…AVIL). The interval 409–453 (GSRGNDATTRDPDQTRVGTATQRTTPDHPTPAATDANQPARSPAP) is disordered.

It belongs to the NhaA Na(+)/H(+) (TC 2.A.33) antiporter family.

The protein localises to the cell membrane. The catalysed reaction is Na(+)(in) + 2 H(+)(out) = Na(+)(out) + 2 H(+)(in). Its function is as follows. Na(+)/H(+) antiporter that extrudes sodium in exchange for external protons. The chain is Na(+)/H(+) antiporter NhaA 2 from Salinispora tropica (strain ATCC BAA-916 / DSM 44818 / JCM 13857 / NBRC 105044 / CNB-440).